The primary structure comprises 417 residues: Gamma-glutamyl phosphate reductase (417 aa).

The protein belongs to the gamma-glutamyl phosphate reductase family.

Its subcellular location is the cytoplasm. The enzyme catalyses L-glutamate 5-semialdehyde + phosphate + NADP(+) = L-glutamyl 5-phosphate + NADPH + H(+). The protein operates within amino-acid biosynthesis; L-proline biosynthesis; L-glutamate 5-semialdehyde from L-glutamate: step 2/2. In terms of biological role, catalyzes the NADPH-dependent reduction of L-glutamate 5-phosphate into L-glutamate 5-semialdehyde and phosphate. The product spontaneously undergoes cyclization to form 1-pyrroline-5-carboxylate. This Escherichia coli O127:H6 (strain E2348/69 / EPEC) protein is Gamma-glutamyl phosphate reductase.